A 232-amino-acid chain; its full sequence is Secreted LysM effector Mg3LysM (232 aa).

Residues 1-16 (MQNIFLAATLLGAAFA) form the signal peptide. In terms of domain architecture, LysM 1 spans 47 to 91 (TNYTVKAGDTLGAIAKQYNSGVCDIAKVNGIDNPDYIKPDQVLSI). Asn48, Asn100, Asn138, Asn195, Asn209, and Asn227 each carry an N-linked (GlcNAc...) asparagine glycan. LysM domains follow at residues 120 to 165 (STYT…VINT) and 177 to 221 (GTYV…IIIL).

This sequence belongs to the secreted LysM effector family.

In terms of biological role, secreted effector that enables the plant pathogenic fungus to manipulate host defenses for successful infection. Binds chitin fragments and blocks the activation of chitin-induced plant defense responses. Protects fungal hyphae against hydrolytic plant enzymes. The chain is Secreted LysM effector Mg3LysM from Zymoseptoria tritici (strain CBS 115943 / IPO323) (Speckled leaf blotch fungus).